We begin with the raw amino-acid sequence, 1250 residues long: MEASRRFPEAEALSPEQAAHYLRYVKEAKEATKNGDLEEAFKLFNLAKDIFPNEKVLSRIQKIQEALEELAEQGDDEFTDVCNSGLLLYRELHNQLFEHQKEGIAFLYSLYRDGRKGGILADDMGLGKTVQIIAFLSGMFDASLVNHVLLIMPTNLINTWVKEFIKWTPGMRVKTFHGPSKDERTRNLNRIQQRNGVIITTYQMLINNWQQLSSFRGQEFVWDYVILDEAHKIKTSSTKSAICARAIPASNRLLLTGTPIQNNLQELWSLFDFACQGSLLGTLKTFKMEYENPITRAREKDATPGEKALGFKISENLMAIIKPYFLRRTKEDVQKKKSSNPEARLNEKNPDVDAICEMPSLSRKNDLIIWIRLVPLQEEIYRKFVSLDHIKELLMETRSPLAELGVLKKLCDHPRLLSARACCLLNLGTFSAQDGNEGEDSPDVDHIDQVTDDTLMEESGKMIFLMDLLKRLRDEGHQTLVFSQSRQILNIIERLLKNRHFKTLRIDGTVTHLLEREKRINLFQQNKDYSVFLLTTQVGGVGLTLTAATRVVIFDPSWNPATDAQAVDRVYRIGQKENVVVYRLITCGTVEEKIYRRQVFKDSLIRQTTGEKKNPFRYFSKQELRELFTIEDLQNSVTQLQLQSLHAAQRKSDIKLDEHIAYLQSLGIAGISDHDLMYTCDLSVKEELDVVEESHYIQQRVQKAQFLVEFESQNKEFLMEQQRTRNEGAWLREPVFPSSTKKKCPKLNKPQPQPSPLLSTHHTQEEDISSKMASVVIDDLPKEGEKQDLSSIKVNVTTLQDGKGTGSADSIATLPKGFGSVEELCTNSSLGMEKSFATKNEAVQKETLQEGPKQEALQEDPLESFNYVLSKSTKADIGPNLDQLKDDEILRHCNPWPIISITNESQNAESNVSIIEIADDLSASHSALQDAQASEAKLEEEPSASSPQYACDFNLFLEDSADNRQNFSSQSLEHVEKENSLCGSAPNSRAGFVHSKTCLSWEFSEKDDEPEEVVVKAKIRSKARRIVSDGEDEDDSFKDTSSINPFNTSLFQFSSVKQFDASTPKNDISPPGRFFSSQIPSSVNKSMNSRRSLASRRSLINMVLDHVEDMEERLDDSSEAKGPEDYPEEGVEESSGEASKYTEEDPSGETLSSENKSSWLMTSKPSALAQETSLGAPEPLSGEQLVGSPQDKAAEATNDYETLVKRGKELKECGKIQEALNCLVKALDIKSADPEVMLLTLSLYKQLNNN.

Ser14 is modified (phosphoserine). One copy of the TPR 1 repeat lies at 21–54; the sequence is YLRYVKEAKEATKNGDLEEAFKLFNLAKDIFPNE. The Helicase ATP-binding domain maps to 109-277; it reads SLYRDGRKGG…WSLFDFACQG (169 aa). 122–129 contacts ATP; sequence DDMGLGKT. Residues 228–231 carry the DEAH box motif; sequence DEAH. The Helicase C-terminal domain occupies 464–620; sequence FLMDLLKRLR…EKKNPFRYFS (157 aa). The disordered stretch occupies residues 735–768; that stretch reads VFPSSTKKKCPKLNKPQPQPSPLLSTHHTQEEDI. Ser755, Ser774, Ser807, and Ser810 each carry phosphoserine. Thr813 carries the phosphothreonine modification. Ser820 carries the post-translational modification Phosphoserine. Residues 926 to 946 are disordered; that stretch reads SALQDAQASEAKLEEEPSASS. Ser969, Ser971, Ser995, Ser1004, and Ser1028 each carry phosphoserine. The tract at residues 1061–1092 is disordered; that stretch reads ASTPKNDISPPGRFFSSQIPSSVNKSMNSRRS. Thr1063 is modified (phosphothreonine; by PLK1). Ser1069 is modified (phosphoserine). Over residues 1075-1087 the composition is skewed to polar residues; sequence FSSQIPSSVNKSM. 2 positions are modified to phosphoserine: Ser1098 and Ser1118. The segment at 1110–1199 is disordered; sequence MEERLDDSSE…QDKAAEATND (90 aa). Positions 1115–1124 are enriched in basic and acidic residues; that stretch reads DDSSEAKGPE. Acidic residues predominate over residues 1125–1135; it reads DYPEEGVEESS. Residues 1149 to 1173 show a composition bias toward polar residues; the sequence is ETLSSENKSSWLMTSKPSALAQETS. Ser1181 and Ser1188 each carry phosphoserine. A TPR 2 repeat occupies 1200-1233; it reads YETLVKRGKELKECGKIQEALNCLVKALDIKSAD.

This sequence belongs to the SNF2/RAD54 helicase family. Interacts with PLK1, which phosphorylates it. Both proteins are mutually dependent on each other for correct subcellular localization. Interacts (via N-terminal TPR repeat) with BEND3 (via BEN domains 1 and 3); the interaction is direct. Post-translationally, phosphorylation by PLK1 prevents the association with chromosome arms and restricts its localization to the kinetochore-centromere region.

The protein resides in the chromosome. Its subcellular location is the centromere. It localises to the kinetochore. The catalysed reaction is ATP + H2O = ADP + phosphate + H(+). In terms of biological role, DNA helicase that acts as a tension sensor that associates with catenated DNA which is stretched under tension until it is resolved during anaphase. Functions as ATP-dependent DNA translocase. Can promote Holliday junction branch migration (in vitro). This Homo sapiens (Human) protein is DNA excision repair protein ERCC-6-like (ERCC6L).